Consider the following 129-residue polypeptide: Prefoldin subunit 6 (129 aa).

Ala2 carries the N-acetylalanine modification. At Lys21 the chain carries N6-acetyllysine. Lys66 carries the N6-acetyllysine; alternate modification. A Glycyl lysine isopeptide (Lys-Gly) (interchain with G-Cter in SUMO1); alternate cross-link involves residue Lys66. Lys66 is covalently cross-linked (Glycyl lysine isopeptide (Lys-Gly) (interchain with G-Cter in SUMO2); alternate).

The protein belongs to the prefoldin subunit beta family. As to quaternary structure, heterohexamer of two PFD-alpha type and four PFD-beta type subunits. Component of the PAQosome complex which is responsible for the biogenesis of several protein complexes and which consists of R2TP complex members RUVBL1, RUVBL2, RPAP3 and PIH1D1, URI complex members PFDN2, PFDN6, PDRG1, UXT and URI1 as well as ASDURF, POLR2E and DNAAF10/WDR92.

Functionally, binds specifically to cytosolic chaperonin (c-CPN) and transfers target proteins to it. Binds to nascent polypeptide chain and promotes folding in an environment in which there are many competing pathways for nonnative proteins. This Bos taurus (Bovine) protein is Prefoldin subunit 6 (PFDN6).